The primary structure comprises 776 residues: DNA ligase (776 aa).

Residues 31–35, 80–81, and E112 contribute to the NAD(+) site; these read DAEYD and SL. K114 functions as the N6-AMP-lysine intermediate in the catalytic mechanism. Residues R135, E172, K288, and K312 each contribute to the NAD(+) site. Residues C406, C409, C436, and C442 each coordinate Zn(2+). Residues 693–776 enclose the BRCT domain; that stretch reads AEGLPLAGQT…TFLAEQGIAV (84 aa).

The protein belongs to the NAD-dependent DNA ligase family. LigA subfamily. Mg(2+) is required as a cofactor. Mn(2+) serves as cofactor.

The enzyme catalyses NAD(+) + (deoxyribonucleotide)n-3'-hydroxyl + 5'-phospho-(deoxyribonucleotide)m = (deoxyribonucleotide)n+m + AMP + beta-nicotinamide D-nucleotide.. Its function is as follows. DNA ligase that catalyzes the formation of phosphodiester linkages between 5'-phosphoryl and 3'-hydroxyl groups in double-stranded DNA using NAD as a coenzyme and as the energy source for the reaction. It is essential for DNA replication and repair of damaged DNA. This Pseudomonas putida (strain ATCC 47054 / DSM 6125 / CFBP 8728 / NCIMB 11950 / KT2440) protein is DNA ligase.